The chain runs to 663 residues: DNA ligase 1 (663 aa).

Residues 30–34 (DAEYD) and 78–79 (SL) contribute to the NAD(+) site. The active-site N6-AMP-lysine intermediate is Lys-105. 3 residues coordinate NAD(+): Arg-126, Glu-161, and Lys-294. Cys-389, Cys-392, Cys-407, and Cys-412 together coordinate Zn(2+). In terms of domain architecture, BRCT spans 574–663 (AAGAPLAGKT…WAQLIEAKLV (90 aa)).

The protein belongs to the NAD-dependent DNA ligase family. LigA subfamily. Mg(2+) is required as a cofactor. The cofactor is Mn(2+).

It carries out the reaction NAD(+) + (deoxyribonucleotide)n-3'-hydroxyl + 5'-phospho-(deoxyribonucleotide)m = (deoxyribonucleotide)n+m + AMP + beta-nicotinamide D-nucleotide.. Functionally, DNA ligase that catalyzes the formation of phosphodiester linkages between 5'-phosphoryl and 3'-hydroxyl groups in double-stranded DNA using NAD as a coenzyme and as the energy source for the reaction. It is essential for DNA replication and repair of damaged DNA. The polypeptide is DNA ligase 1 (Nocardia farcinica (strain IFM 10152)).